The primary structure comprises 469 residues: MTTKTRFAPSPTGFLHVGGARTALYSWLQARANNGEFVLRIEDTDIERSTQAACDAILEGMNWLGLTWDEGPYYQTKRFDRYNEIIAQMLEKGTAYKCYCSRERIDALRESQAANGEAQKYDGCCRDLPARDTDEPFVVRFKNPIGGSVVFDDHVRGRIEFSNDALDDLIIARTDGVPTYNFCVVVDDWDMGITCVVRGEDHINNTPRQINILKALGAPIPEYAHVSMILGDDGAKLSKRHGAVSVMQYRDDGYLPEALLNYLVRLGWSHGDQEVFSLEEMKQYFKLDDINKAPSAFNTDKLVWLNQHYIKTLDPEYVATHLQWHMDDQKIDTSNGPALAEVVTALAERAKTLKELAASSRYFYEDFADFDAEQAKKHLRGVALEPLQLVQQKLAALTEWTVEAIHLAIEQTATELDVGMGKVGMPLRVAVTGAGQSPGLDITLFLIGRSRSEQRISKAIEFVADRINS.

A 'HIGH' region motif is present at residues 9 to 19 (PSPTGFLHVGG). Residues Cys-98, Cys-100, Cys-125, and Asp-127 each contribute to the Zn(2+) site. The 'KMSKS' region signature appears at 236–240 (KLSKR). Lys-239 is an ATP binding site.

This sequence belongs to the class-I aminoacyl-tRNA synthetase family. Glutamate--tRNA ligase type 1 subfamily. In terms of assembly, monomer. Requires Zn(2+) as cofactor.

Its subcellular location is the cytoplasm. It catalyses the reaction tRNA(Glu) + L-glutamate + ATP = L-glutamyl-tRNA(Glu) + AMP + diphosphate. Its function is as follows. Catalyzes the attachment of glutamate to tRNA(Glu) in a two-step reaction: glutamate is first activated by ATP to form Glu-AMP and then transferred to the acceptor end of tRNA(Glu). The chain is Glutamate--tRNA ligase from Shewanella putrefaciens (strain CN-32 / ATCC BAA-453).